Consider the following 69-residue polypeptide: Protein translocase subunit SecE (69 aa).

The helical transmembrane segment at 43-63 (GLGICLLGFVGFVIHVPITYL) threads the bilayer.

This sequence belongs to the SecE/SEC61-gamma family. Component of the Sec protein translocase complex. Heterotrimer consisting of SecY (alpha), SecG (beta) and SecE (gamma) subunits. The heterotrimers can form oligomers, although 1 heterotrimer is thought to be able to translocate proteins. Interacts with the ribosome. May interact with SecDF, and other proteins may be involved.

The protein localises to the cell membrane. Its function is as follows. Essential subunit of the Sec protein translocation channel SecYEG. Clamps together the 2 halves of SecY. May contact the channel plug during translocation. The polypeptide is Protein translocase subunit SecE (Methanococcus maripaludis (strain DSM 14266 / JCM 13030 / NBRC 101832 / S2 / LL)).